Consider the following 279-residue polypeptide: Large ribosomal subunit protein uL2 (279 aa).

The segment at 218 to 279 is disordered; it reads RPQTRGSAMN…ITRRKSNPKR (62 aa). The segment covering 255–279 has biased composition (basic residues); that stretch reads KGSKTRRKKASDKLIITRRKSNPKR.

Belongs to the universal ribosomal protein uL2 family. As to quaternary structure, part of the 50S ribosomal subunit. Forms a bridge to the 30S subunit in the 70S ribosome.

Its function is as follows. One of the primary rRNA binding proteins. Required for association of the 30S and 50S subunits to form the 70S ribosome, for tRNA binding and peptide bond formation. It has been suggested to have peptidyltransferase activity; this is somewhat controversial. Makes several contacts with the 16S rRNA in the 70S ribosome. The protein is Large ribosomal subunit protein uL2 of Sulfurimonas denitrificans (strain ATCC 33889 / DSM 1251) (Thiomicrospira denitrificans (strain ATCC 33889 / DSM 1251)).